Reading from the N-terminus, the 233-residue chain is Large ribosomal subunit protein uL1 (233 aa).

The protein belongs to the universal ribosomal protein uL1 family. In terms of assembly, part of the 50S ribosomal subunit.

In terms of biological role, binds directly to 23S rRNA. The L1 stalk is quite mobile in the ribosome, and is involved in E site tRNA release. Protein L1 is also a translational repressor protein, it controls the translation of the L11 operon by binding to its mRNA. The sequence is that of Large ribosomal subunit protein uL1 from Geobacillus thermodenitrificans (strain NG80-2).